Reading from the N-terminus, the 315-residue chain is DNA-directed RNA polymerase subunit alpha (315 aa).

The interval 1–228 is alpha N-terminal domain (alpha-NTD); sequence MLEIEKPIIE…EHFKLFMSLT (228 aa). The tract at residues 245–315 is alpha C-terminal domain (alpha-CTD); sequence KEKVLEMTVE…LGLALKLTEE (71 aa).

Belongs to the RNA polymerase alpha chain family. In terms of assembly, homodimer. The RNAP catalytic core consists of 2 alpha, 1 beta, 1 beta' and 1 omega subunit. When a sigma factor is associated with the core the holoenzyme is formed, which can initiate transcription.

It carries out the reaction RNA(n) + a ribonucleoside 5'-triphosphate = RNA(n+1) + diphosphate. DNA-dependent RNA polymerase catalyzes the transcription of DNA into RNA using the four ribonucleoside triphosphates as substrates. This chain is DNA-directed RNA polymerase subunit alpha, found in Clostridium beijerinckii (strain ATCC 51743 / NCIMB 8052) (Clostridium acetobutylicum).